Consider the following 54-residue polypeptide: U-myrmicitoxin(01)-Tb5a (54 aa).

The signal sequence occupies residues 1–26; that stretch reads MQLSHLLLAFAMIFVMTIMYAPQVQA. Residues 27 to 38 constitute a propeptide that is removed on maturation; it reads DAWADANADADV.

The protein belongs to the formicidae venom precursor-01 superfamily. Post-translationally, contains 1 disulfide bond. In terms of tissue distribution, expressed by the venom gland.

It localises to the secreted. The protein is U-myrmicitoxin(01)-Tb5a of Tetramorium bicarinatum (Tramp ant).